Consider the following 137-residue polypeptide: Large ribosomal subunit protein uL16 (137 aa).

Residues 1–17 (MLQPKRTKFRKQQKGRN) are compositionally biased toward basic residues. The disordered stretch occupies residues 1 to 24 (MLQPKRTKFRKQQKGRNRGLAQSG).

Belongs to the universal ribosomal protein uL16 family. Part of the 50S ribosomal subunit.

Functionally, binds 23S rRNA and is also seen to make contacts with the A and possibly P site tRNAs. The protein is Large ribosomal subunit protein uL16 of Dichelobacter nodosus (strain VCS1703A).